A 131-amino-acid chain; its full sequence is Small ribosomal subunit protein uS8 (131 aa).

This sequence belongs to the universal ribosomal protein uS8 family. Part of the 30S ribosomal subunit. Contacts proteins S5 and S12.

In terms of biological role, one of the primary rRNA binding proteins, it binds directly to 16S rRNA central domain where it helps coordinate assembly of the platform of the 30S subunit. This chain is Small ribosomal subunit protein uS8, found in Hyphomonas neptunium (strain ATCC 15444).